The following is a 220-amino-acid chain: Guanylate kinase (220 aa).

A Guanylate kinase-like domain is found at 14–194 (GLMVVISSPS…SYAAIKSIIN (181 aa)). Residue 21-28 (SPSGAGKS) participates in ATP binding.

It belongs to the guanylate kinase family.

It localises to the cytoplasm. It carries out the reaction GMP + ATP = GDP + ADP. In terms of biological role, essential for recycling GMP and indirectly, cGMP. The protein is Guanylate kinase of Brucella abortus (strain 2308).